Here is a 961-residue protein sequence, read N- to C-terminus: Phosphofurin acidic cluster sorting protein 1 (961 aa).

A compositionally biased stretch (gly residues) spans 1-19 (MAERGGAGGGPGGSGGGSS). Disordered regions lie at residues 1 to 70 (MAER…SSST) and 76 to 95 (VAVA…RTPA). Ala-2 is modified (N-acetylalanine). Positions 20–34 (QRGSGVAQSPQQQPQ) are enriched in low complexity. At Ser-28 the chain carries Phosphoserine. Over residues 35–46 (QQPPQPQQPTPP) the composition is skewed to pro residues. Thr-44 is subject to Phosphothreonine. Residues 51-70 (ATSSSSSTSAAAASSSSSST) are compositionally biased toward low complexity. Position 249 is a phosphotyrosine (Tyr-249). Positions 260–271 (GIKSKLSDRSPD) are enriched in basic and acidic residues. Disordered regions lie at residues 260–297 (GIKS…LHGQ) and 375–426 (NPSD…GKDT). Acidic residues predominate over residues 274-291 (NYSEEEEESFSSEQEGSD). A coiled-coil region spans residues 351-375 (HVSREQIREVEEDLDELYDSLEMYN). Phosphoserine is present on residues Ser-377 and Ser-379. Polar residues predominate over residues 404 to 426 (MSQSSSQTEIGSLNSKGSLGKDT). Ser-428 and Ser-493 each carry phosphoserine. Disordered stretches follow at residues 475 to 540 (EKVK…HSTQ) and 758 to 802 (SPST…SMSS). Thr-502 is subject to Phosphothreonine. Phosphoserine is present on residues Ser-517, Ser-526, Ser-527, Ser-529, and Ser-532. Low complexity predominate over residues 768–802 (SPVVSLTVPSTSPPSSSGLSRDATATPPSSPSMSS).

This sequence belongs to the PACS family. Associates with AP-1 and AP-3 but not with AP-2 complexes. Interacts with FURIN. Forms a ternary complex with FURIN and AP-1. Interacts with PKD2 (via acidic region). Interacts with SORL1. Interacts with WDR37.

It is found in the golgi apparatus. It localises to the trans-Golgi network. Its function is as follows. Coat protein that is involved in the localization of trans-Golgi network (TGN) membrane proteins that contain acidic cluster sorting motifs. Controls the endosome-to-Golgi trafficking of furin and mannose-6-phosphate receptor by connecting the acidic-cluster-containing cytoplasmic domain of these molecules with the adapter-protein complex-1 (AP-1) of endosomal clathrin-coated membrane pits. Required for normal ER Ca2+ handling in lymphocytes. Together with WDR37, it plays an essential role in lymphocyte development, quiescence and survival. Required for stabilizing peripheral lymphocyte populations. This is Phosphofurin acidic cluster sorting protein 1 (Pacs1) from Mus musculus (Mouse).